The following is a 392-amino-acid chain: NADH-quinone oxidoreductase subunit D (392 aa).

Belongs to the complex I 49 kDa subunit family. NDH-1 is composed of 14 different subunits. Subunits NuoB, C, D, E, F, and G constitute the peripheral sector of the complex.

It localises to the cell inner membrane. It catalyses the reaction a quinone + NADH + 5 H(+)(in) = a quinol + NAD(+) + 4 H(+)(out). Functionally, NDH-1 shuttles electrons from NADH, via FMN and iron-sulfur (Fe-S) centers, to quinones in the respiratory chain. The immediate electron acceptor for the enzyme in this species is believed to be ubiquinone. Couples the redox reaction to proton translocation (for every two electrons transferred, four hydrogen ions are translocated across the cytoplasmic membrane), and thus conserves the redox energy in a proton gradient. The polypeptide is NADH-quinone oxidoreductase subunit D (Paramagnetospirillum magneticum (strain ATCC 700264 / AMB-1) (Magnetospirillum magneticum)).